Here is a 67-residue protein sequence, read N- to C-terminus: Beta-defensin 123 (67 aa).

The signal sequence occupies residues 1 to 20 (MKLLLLTLTVLLLLSQLTPG). 3 disulfides stabilise this stretch: cysteine 25–cysteine 52, cysteine 32–cysteine 46, and cysteine 36–cysteine 53.

The protein belongs to the beta-defensin family.

It localises to the secreted. Has antibacterial activity. The sequence is that of Beta-defensin 123 (DEFB123) from Gorilla gorilla gorilla (Western lowland gorilla).